The chain runs to 406 residues: LIM/homeobox protein Lhx1 (406 aa).

LIM zinc-binding domains lie at 4–54 (CAGC…CKND) and 63–117 (CAGC…CKED). 2 disordered regions span residues 128–189 (NSLH…TIKA) and 294–372 (DFFP…SAEV). A compositionally biased stretch (low complexity) spans 137 to 148 (SDPSLSPDSQDP). Positions 151–167 (DDAKDSESANVSDKEGG) are enriched in basic and acidic residues. Phosphoserine is present on S162. Residues 180–239 (RRGPRTTIKAKQLETLKAAFAATPKPTRHIREQLAQETGLNMRVIQVWFQNRRSKERRMK) constitute a DNA-binding region (homeobox). Positions 315–327 (PSSGPSGTPLGGL) are enriched in low complexity. Over residues 352-362 (GDSPSPEPSLP) the composition is skewed to pro residues.

Interacts with LDB1 via the tandem LIM domains.

Its subcellular location is the nucleus. Potential transcription factor. May play a role in early mesoderm formation and later in lateral mesoderm differentiation and neurogenesis. This chain is LIM/homeobox protein Lhx1 (Lhx1), found in Mesocricetus auratus (Golden hamster).